The chain runs to 420 residues: Corticotropin-releasing factor receptor 1 (420 aa).

An N-terminal signal peptide occupies residues 1-28 (MVPGPRPALLLLLFLLQAFLLWDSPVAA). Residues 29–116 (SIQEQYCESL…CQEILSEEKR (88 aa)) lie on the Extracellular side of the membrane. Disulfide bonds link Cys35–Cys59, Cys49–Cys92, and Cys73–Cys107. N-linked (GlcNAc...) asparagine glycans are attached at residues Asn43, Asn50, Asn83, Asn95, and Asn103. A helical membrane pass occupies residues 117 to 147 (SKLHYHIAVIINYLGHCVSLGTLLVAFVLFM). Topologically, residues 148–154 (RLRSIRC) are cytoplasmic. Residues 155–179 (LRNIIHWNLITAFILRNATWFVVQL) form a helical membrane-spanning segment. The Extracellular segment spans residues 180 to 194 (TMNPEVHESNVVWCR). A disulfide bond links Cys193 and Cys263. Residues 195–223 (LVTAAYNYFHVTNFFWMFGEGCYLHTAIV) traverse the membrane as a helical segment. The Cytoplasmic portion of the chain corresponds to 224 to 230 (LTYSTDK). Residues 231-258 (LRKWMFICIGWCIPFPIIVAWAIGKLYY) traverse the membrane as a helical segment. Over 259 to 274 (DNEKCWFGKRAGVYTD) the chain is Extracellular. The chain crosses the membrane as a helical span at residues 275-300 (YIYQGPMILVLLINFIFLFNIVRILM). Residues 301–311 (TKLRASTTSET) lie on the Cytoplasmic side of the membrane. A helical transmembrane segment spans residues 312–336 (IQYRKAVKATLVLLSLLGITYMLFF). Over 337–343 (VNPGEDE) the chain is Extracellular. Residues 344 to 373 (ISRIVFIYFNSFLESFQGFFVSVFYCFLNS) traverse the membrane as a helical segment. Over 374-420 (EVRSAVRKRWHRWQDKHSIRARVARAMSIPTSPTRVSFHSIKQSSAV) the chain is Cytoplasmic.

This sequence belongs to the G-protein coupled receptor 2 family. In terms of assembly, interacts (via N-terminal extracellular domain) with CRF and UCN.

The protein resides in the cell membrane. G-protein coupled receptor for CRH (corticotropin-releasing factor) and UCN (urocortin). Has high affinity for CRH and UCN. Ligand binding causes a conformation change that triggers signaling via guanine nucleotide-binding proteins (G proteins) and down-stream effectors, such as adenylate cyclase. Promotes the activation of adenylate cyclase, leading to increased intracellular cAMP levels. The protein is Corticotropin-releasing factor receptor 1 (CRHR1) of Gallus gallus (Chicken).